The chain runs to 574 residues: MRYALERFISDIQAAIVATGKVPADLIEITTPKPNIPADRTFVTFKAAKALGVDPVRLAADLATAIVPPPDSLIGEVTATGAFLNFTLHPQRLAAAVMAEIETYGDAYGSVADGANRTVVIDYSSPNIAKRMHVGHIRSTIIGQALVHIFRALGYRVIGDNHLGDWGTQFGIILAAMQRYGRPQNEGEAAMAELEALYARYNAEMKDNPPLEDEARRWSLALEQGDPTARELWQWCVDLTMRAAQRNYDRLGVRFDYAYGESFYEAMLPGVIEEALQSGAAFRDVDGAVVAELDKLPRFIVQRSDGGTVYITRDIATIKFRLQEFNPSHIIYVVDARQELHFRQLFAIVRAMGYALDVELIHVPFGVITTPDGQPLSTKKGNMVYLESLLDDAVARARALVDAKSPTLSPEERAQIAEAVGIGAVIYNDLYQDPRRNITLDWDRMLSIEGNSAAYLQYSHARCRSILRRAAEEGMLSTEVDPGLLTHPSEQRLVRHLARLPEAVREAGARYAPFVIADWCYTTAREFGIFFEQCPVLRAETPALRAARLQLVSATANALRNGLALLGIQAPERM.

Positions 126-136 (PNIAKRMHVGH) match the 'HIGH' region motif.

The protein belongs to the class-I aminoacyl-tRNA synthetase family. Monomer.

It is found in the cytoplasm. It catalyses the reaction tRNA(Arg) + L-arginine + ATP = L-arginyl-tRNA(Arg) + AMP + diphosphate. This Chloroflexus aurantiacus (strain ATCC 29366 / DSM 635 / J-10-fl) protein is Arginine--tRNA ligase.